Here is a 369-residue protein sequence, read N- to C-terminus: MAMMVDPPNGMGNQGKHYYTMWQTLFEIDTKYVPIKPIGRGAYGIVCSSINRATNEKVAIKKINNVFDNRVDALRTLRELKLLRHLRHENVIALKDIMMPVHRRSFKDVYLVYELMDTDLHQIIKSSQPLSNDHCQYFLFQLLRGLKYLHSAGILHRDLKPGNLLVNANCDLKICDFGLARTNNTKGQFMTEYVVTRWYRAPELLLCCDNYGTSIDVWSVGCIFAELLGRKPIFPGTECLNQLKLIVNVLGTMSEADIEFIDNPKARKYIKTLPYTPGIPLTSMYPQAHPLAIDLLQKMLVFDPSKRISVTEALEHPYMSPLYDPSANPPAQVPIDLDIDENLGVDMIREMMWQEMLHYHPEVVAGVNM.

A Protein kinase domain is found at 32–319; the sequence is YVPIKPIGRG…VTEALEHPYM (288 aa). Residues 38-46 and Lys-61 contribute to the ATP site; that span reads IGRGAYGIV. The active-site Proton acceptor is the Asp-158. Thr-191 bears the Phosphothreonine mark. Residues 191 to 193 carry the TXY motif; that stretch reads TEY. Phosphotyrosine is present on Tyr-193.

Belongs to the protein kinase superfamily. CMGC Ser/Thr protein kinase family. MAP kinase subfamily. In terms of processing, dually phosphorylated on Thr-191 and Tyr-193, which activates the enzyme. Expressed in leaves and panicles.

It carries out the reaction L-seryl-[protein] + ATP = O-phospho-L-seryl-[protein] + ADP + H(+). It catalyses the reaction L-threonyl-[protein] + ATP = O-phospho-L-threonyl-[protein] + ADP + H(+). Its activity is regulated as follows. Activated by threonine and tyrosine phosphorylation. The polypeptide is Mitogen-activated protein kinase 4 (MPK4) (Oryza sativa subsp. japonica (Rice)).